A 478-amino-acid chain; its full sequence is Aspartyl/glutamyl-tRNA(Asn/Gln) amidotransferase subunit B (478 aa).

This sequence belongs to the GatB/GatE family. GatB subfamily. In terms of assembly, heterotrimer of A, B and C subunits.

The enzyme catalyses L-glutamyl-tRNA(Gln) + L-glutamine + ATP + H2O = L-glutaminyl-tRNA(Gln) + L-glutamate + ADP + phosphate + H(+). It catalyses the reaction L-aspartyl-tRNA(Asn) + L-glutamine + ATP + H2O = L-asparaginyl-tRNA(Asn) + L-glutamate + ADP + phosphate + 2 H(+). In terms of biological role, allows the formation of correctly charged Asn-tRNA(Asn) or Gln-tRNA(Gln) through the transamidation of misacylated Asp-tRNA(Asn) or Glu-tRNA(Gln) in organisms which lack either or both of asparaginyl-tRNA or glutaminyl-tRNA synthetases. The reaction takes place in the presence of glutamine and ATP through an activated phospho-Asp-tRNA(Asn) or phospho-Glu-tRNA(Gln). The sequence is that of Aspartyl/glutamyl-tRNA(Asn/Gln) amidotransferase subunit B from Dichelobacter nodosus (strain VCS1703A).